Reading from the N-terminus, the 434-residue chain is Maintenance of mitochondrial morphology protein 1 (434 aa).

Residues 1 to 105 lie on the Lumenal side of the membrane; that stretch reads MEMSELLASE…SFSSQSFAEG (105 aa). A helical membrane pass occupies residues 106–126; it reads LIVGQLSVIVALIFVIKFFVF. The Cytoplasmic portion of the chain corresponds to 127-434; the sequence is SEGGTKTATA…DDSVSVKSND (308 aa). Positions 194–408 constitute an SMP-LTD domain; that stretch reads SPESLDWFNV…EPRFQFVKLP (215 aa). The tract at residues 415–434 is disordered; that stretch reads KNTRKEKTDTDDSVSVKSND.

The protein belongs to the MMM1 family. In terms of assembly, homodimer. Component of the ER-mitochondria encounter structure (ERMES) or MDM complex, composed of MMM1, MDM10, MDM12 and MDM34. An MMM1 homodimer associates with one molecule of MDM12 on each side in a pairwise head-to-tail manner, and the SMP-LTD domains of MMM1 and MDM12 generate a continuous hydrophobic tunnel for phospholipid trafficking.

Its subcellular location is the endoplasmic reticulum membrane. Component of the ERMES/MDM complex, which serves as a molecular tether to connect the endoplasmic reticulum (ER) and mitochondria. Components of this complex are involved in the control of mitochondrial shape and protein biogenesis, and function in nonvesicular lipid trafficking between the ER and mitochondria. The MDM12-MMM1 subcomplex functions in the major beta-barrel assembly pathway that is responsible for biogenesis of all outer membrane beta-barrel proteins, and acts in a late step after the SAM complex. The MDM10-MDM12-MMM1 subcomplex further acts in the TOM40-specific pathway after the action of the MDM12-MMM1 complex. Essential for establishing and maintaining the structure of mitochondria and maintenance of mtDNA nucleoids. This Kluyveromyces lactis (strain ATCC 8585 / CBS 2359 / DSM 70799 / NBRC 1267 / NRRL Y-1140 / WM37) (Yeast) protein is Maintenance of mitochondrial morphology protein 1.